Consider the following 233-residue polypeptide: Glucosamine-6-phosphate deaminase (233 aa).

Catalysis depends on D62, which acts as the Proton acceptor; for enolization step. N128 functions as the For ring-opening step in the catalytic mechanism. H130 acts as the Proton acceptor; for ring-opening step in catalysis. E135 functions as the For ring-opening step in the catalytic mechanism.

Belongs to the glucosamine/galactosamine-6-phosphate isomerase family. NagB subfamily.

It carries out the reaction alpha-D-glucosamine 6-phosphate + H2O = beta-D-fructose 6-phosphate + NH4(+). It functions in the pathway amino-sugar metabolism; N-acetylneuraminate degradation; D-fructose 6-phosphate from N-acetylneuraminate: step 5/5. In terms of biological role, catalyzes the reversible isomerization-deamination of glucosamine 6-phosphate (GlcN6P) to form fructose 6-phosphate (Fru6P) and ammonium ion. The chain is Glucosamine-6-phosphate deaminase from Leuconostoc citreum (strain KM20).